Here is a 613-residue protein sequence, read N- to C-terminus: Chaperone protein DnaK (613 aa).

Residues 578–613 (MYQSQATQGTSQNSSQNNNSQNNNGDTVDADFKESK) form a disordered region. Residues 580–602 (QSQATQGTSQNSSQNNNSQNNNG) are compositionally biased toward low complexity.

It belongs to the heat shock protein 70 family.

Functionally, acts as a chaperone. The protein is Chaperone protein DnaK of Picrophilus torridus (strain ATCC 700027 / DSM 9790 / JCM 10055 / NBRC 100828 / KAW 2/3).